Reading from the N-terminus, the 312-residue chain is Methionyl-tRNA formyltransferase (312 aa).

110–113 is a binding site for (6S)-5,6,7,8-tetrahydrofolate; that stretch reads SLLP.

This sequence belongs to the Fmt family.

It catalyses the reaction L-methionyl-tRNA(fMet) + (6R)-10-formyltetrahydrofolate = N-formyl-L-methionyl-tRNA(fMet) + (6S)-5,6,7,8-tetrahydrofolate + H(+). Its function is as follows. Attaches a formyl group to the free amino group of methionyl-tRNA(fMet). The formyl group appears to play a dual role in the initiator identity of N-formylmethionyl-tRNA by promoting its recognition by IF2 and preventing the misappropriation of this tRNA by the elongation apparatus. The polypeptide is Methionyl-tRNA formyltransferase (Mycobacterium ulcerans (strain Agy99)).